The primary structure comprises 742 residues: Two-component response regulator-like PRR37 (742 aa).

The 119-residue stretch at 63–181 (KVLLVDSDDS…ELKNLWQHVW (119 aa)) folds into the Response regulatory domain. Positions 186 to 195 (SSSGSGSESG) are enriched in low complexity. Disordered stretches follow at residues 186-249 (SSSG…SWTK), 290-346 (PCTS…PLQN), 375-402 (DAQQAARATNAPNCSSKVPEGKDKNRDN), 478-570 (MKSN…VQSN), 590-671 (NGGS…GNDM), and 697-742 (NFGK…AADR). The span at 236-248 (DNGSGTQAQSSWT) shows a compositional bias: polar residues. Over residues 299–313 (KQKETNDDFKGKDLE) the composition is skewed to basic and acidic residues. Residues 318–330 (RNLNTAYQSSPNE) show a composition bias toward polar residues. Over residues 331 to 341 (RSIKPTDRRNE) the composition is skewed to basic and acidic residues. Residues 380-390 (ARATNAPNCSS) show a composition bias toward polar residues. Low complexity predominate over residues 490-502 (GSNGSSNNNDMGS). A compositionally biased stretch (polar residues) spans 503–512 (TTKNVVTKPS). Residues 618–634 (NGSNSGSNNGSNGQNGS) show a composition bias toward low complexity. Gly residues predominate over residues 656–667 (GPGGGNGSGSGS). The CCT domain occupies 682 to 724 (RVAAVIKFRQKRKERNFGKKVRYQSRKRLAEQRPRVRGQFVRQ). A compositionally biased stretch (basic residues) spans 697-708 (NFGKKVRYQSRK). Over residues 719–731 (GQFVRQAVQDQQQ) the composition is skewed to low complexity.

This sequence belongs to the ARR-like family.

Its subcellular location is the nucleus. Controls photoperiodic flowering response. Seems to be one of the component of the circadian clock. Expression of several members of the ARR-like family is controlled by circadian rhythm. The particular coordinated sequential expression of PRR73, PRR37, PRR95, PRR59 and PPR1 result to circadian waves that may be at the basis of the endogenous circadian clock. This is Two-component response regulator-like PRR37 (PRR37) from Oryza sativa subsp. indica (Rice).